The following is a 1581-amino-acid chain: Ankyrin repeat domain-containing protein 26 (1581 aa).

The tract at residues 1-22 (MKKIFGFRSKGPSPLGPSARPR) is disordered. Residue serine 13 is modified to Phosphoserine. 5 ANK repeats span residues 46–76 (KDMG…GVND), 80–109 (KDRT…EIDA), 113–142 (ESST…DPNV), 146–175 (SGNT…NIEA), and 179–208 (DDLT…SIHA). 4 disordered regions span residues 225–270 (RLQR…FDNK), 299–343 (LDNG…PVEG), 361–381 (SASQ…WHKS), and 488–652 (VLNK…QTAA). A compositionally biased stretch (polar residues) spans 229 to 250 (SENSNPVDNGSEDGSLTRSYNT). Phosphoserine occurs at positions 239 and 260. The span at 308–319 (SDSPSESEDAIE) shows a compositional bias: acidic residues. Residues 327–337 (RVQTLSPSRQS) are compositionally biased toward polar residues. Residues 367-381 (PNHDNLTRADGWHKS) show a composition bias toward basic and acidic residues. Positions 491-504 (KTETVGMTDAQTFK) are enriched in polar residues. Basic and acidic residues-rich tracts occupy residues 505–516 (SEPESVSREEQT), 524–538 (SQQK…KNNE), and 585–601 (KEAK…REPA). Phosphoserine is present on serine 511. 4 coiled-coil regions span residues 715–845 (RSHC…NARM), 876–1345 (HEKE…MVEH), 1396–1470 (RSQM…RSLL), and 1521–1550 (LTKM…FCRV).

In terms of assembly, interacts with TRIO. Interacts with GPS2. Interacts with CCDC85B. Interacts with HMMR. Widely expressed. Expressed in the arcuate and ventromedial nuclei within the hypothalamus and in the ependyma and the circumventricular organs (at protein level).

The protein localises to the cytoplasm. It localises to the cytosol. Acts as a regulator of adipogenesis. Involved in the regulation of the feeding behavior. This chain is Ankyrin repeat domain-containing protein 26 (Ankrd26), found in Mus musculus (Mouse).